Here is a 72-residue protein sequence, read N- to C-terminus: Translation initiation factor IF-1 (72 aa).

Residues 1–72 (MAKEDVIEIE…TRGRITYRFK (72 aa)) form the S1-like domain.

It belongs to the IF-1 family. As to quaternary structure, component of the 30S ribosomal translation pre-initiation complex which assembles on the 30S ribosome in the order IF-2 and IF-3, IF-1 and N-formylmethionyl-tRNA(fMet); mRNA recruitment can occur at any time during PIC assembly.

The protein resides in the cytoplasm. Functionally, one of the essential components for the initiation of protein synthesis. Stabilizes the binding of IF-2 and IF-3 on the 30S subunit to which N-formylmethionyl-tRNA(fMet) subsequently binds. Helps modulate mRNA selection, yielding the 30S pre-initiation complex (PIC). Upon addition of the 50S ribosomal subunit IF-1, IF-2 and IF-3 are released leaving the mature 70S translation initiation complex. The polypeptide is Translation initiation factor IF-1 (Streptococcus mutans serotype c (strain ATCC 700610 / UA159)).